A 423-amino-acid polypeptide reads, in one-letter code: CinA-like protein (423 aa).

It belongs to the CinA family.

This is CinA-like protein from Synechococcus sp. (strain CC9311).